The chain runs to 272 residues: Transcription factor GAL1 (272 aa).

The span at methionine 1–leucine 10 shows a compositional bias: polar residues. Disordered stretches follow at residues methionine 1–threonine 49, tyrosine 102–isoleucine 215, and lysine 246–tyrosine 272. Acidic residues-rich tracts occupy residues glutamate 113–glutamine 122 and serine 152–glutamate 174. Residues leucine 175–isoleucine 215 are compositionally biased toward basic and acidic residues. The CCHC-type zinc finger occupies cysteine 240–aspartate 255.

It localises to the nucleus. Its function is as follows. Transcription factor; part of the gene cluster that mediates the biosynthesis of liamocins, glycolipids (also called heavy oils) composed of a single mannitol or arabitol headgroup linked to either three, four or even six 3,5-dihydroxydecanoic ester tail-groups. Positively regulates the expression of PKS1 and EST1 that mediate the biosynthesis of liamocins. The protein is Transcription factor GAL1 of Aureobasidium melanogenum (Aureobasidium pullulans var. melanogenum).